The chain runs to 265 residues: uncharacterized protein (265 aa).

Residues 3 to 23 (KKTWVYIIIAIIIILLLVWYF) form a helical; Signal-anchor for type II membrane protein membrane-spanning segment. N-linked (GlcNAc...) asparagine; by host glycosylation is found at asparagine 37 and asparagine 125. Positions 37-94 (NQTYNMLQQQISSLNQQILFLKQQISNLHVPAPTSTVNSLRQTVSDINQQVSTINNQI) form a coiled coil. Residues 158-257 (NVADNELNVL…KNSLGSAVRN (100 aa)) are a coiled coil.

Its subcellular location is the host membrane. The protein localises to the virion. This is an uncharacterized protein from Acanthamoeba polyphaga (Amoeba).